Consider the following 1058-residue polypeptide: Carbamoyl phosphate synthase large chain (1058 aa).

A carboxyphosphate synthetic domain region spans residues methionine 1–glutamate 401. Residues arginine 129, arginine 169, glycine 175, glycine 176, arginine 208, isoleucine 210, glutamate 215, glycine 241, isoleucine 242, histidine 243, glutamine 284, and glutamate 298 each contribute to the ATP site. An ATP-grasp 1 domain is found at lysine 133–valine 327. Positions 284, 298, and 300 each coordinate Mg(2+). Residues glutamine 284, glutamate 298, and asparagine 300 each coordinate Mn(2+). An oligomerization domain region spans residues isoleucine 402 to serine 546. The carbamoyl phosphate synthetic domain stretch occupies residues isoleucine 547–tyrosine 929. Positions glutamate 671–leucine 861 constitute an ATP-grasp 2 domain. Residues arginine 707, serine 746, isoleucine 748, glutamate 752, glycine 777, valine 778, histidine 779, serine 780, glutamine 820, and glutamate 832 each contribute to the ATP site. 3 residues coordinate Mg(2+): glutamine 820, glutamate 832, and asparagine 834. Mn(2+) is bound by residues glutamine 820, glutamate 832, and asparagine 834. The MGS-like domain occupies leucine 930–isoleucine 1058. Residues leucine 930 to isoleucine 1058 are allosteric domain.

The protein belongs to the CarB family. Composed of two chains; the small (or glutamine) chain promotes the hydrolysis of glutamine to ammonia, which is used by the large (or ammonia) chain to synthesize carbamoyl phosphate. Tetramer of heterodimers (alpha,beta)4. Mg(2+) is required as a cofactor. Mn(2+) serves as cofactor.

The enzyme catalyses hydrogencarbonate + L-glutamine + 2 ATP + H2O = carbamoyl phosphate + L-glutamate + 2 ADP + phosphate + 2 H(+). The catalysed reaction is hydrogencarbonate + NH4(+) + 2 ATP = carbamoyl phosphate + 2 ADP + phosphate + 2 H(+). The protein operates within amino-acid biosynthesis; L-arginine biosynthesis; carbamoyl phosphate from bicarbonate: step 1/1. It functions in the pathway pyrimidine metabolism; UMP biosynthesis via de novo pathway; (S)-dihydroorotate from bicarbonate: step 1/3. Its function is as follows. Large subunit of the glutamine-dependent carbamoyl phosphate synthetase (CPSase). CPSase catalyzes the formation of carbamoyl phosphate from the ammonia moiety of glutamine, carbonate, and phosphate donated by ATP, constituting the first step of 2 biosynthetic pathways, one leading to arginine and/or urea and the other to pyrimidine nucleotides. The large subunit (synthetase) binds the substrates ammonia (free or transferred from glutamine from the small subunit), hydrogencarbonate and ATP and carries out an ATP-coupled ligase reaction, activating hydrogencarbonate by forming carboxy phosphate which reacts with ammonia to form carbamoyl phosphate. The protein is Carbamoyl phosphate synthase large chain of Streptococcus equi subsp. equi (strain 4047).